The following is a 565-amino-acid chain: MIKISKKDYVNMYGPTTNDRVRLADTDLILRVEKDYTLYGEEVKFGGGKNIRDGMAQSVSEGDFPDLVLTNALIVDYTGIYKADIGIKNGYIVGIGKAGNPDIQDGVDPSLIIGTNTDIIGAEGLIVTAGGIDTHIHFISPTQIECALYSGVTTMIGGGIGPSEGTNATTCTSGAYHIHSMLKATQNYPMNFGFLGKGNSSNKNALKEQIIAGACGLKIHEDWGATSSVIDASLNIADEMDIQVAIHTDTLNEAGFVEDTIKAINGRVIHTFHTEGAGGGHAPDIIKMAGFENVLPASTNPTMPFTKNTIDEHLDMLMVCHHLDNKIKEDVEFADSRIRPETIAAEDKLHDMGVFSIMSSDSQAMGRVGEVILRTWQSADKCKKEFGALKEDNDLDDNFRIKRYIAKYTINPAIAHGIDSYVGSIEVGKFADLVLWQPKFFGVKPKLILKGGLIVGAKIGDANASIPTPEPIIYEKMFGANLNENALHFVSKASLDANIPEKLSLKRKCVAVKNCRNITKKDLKFNDKVQDIEVNPQTYEVKINGELISSKSVDSLALARKYFMI.

Residues 130-565 (GGIDTHIHFI…LALARKYFMI (436 aa)) form the Urease domain. The Ni(2+) site is built by H135, H137, and K218. K218 carries the post-translational modification N6-carboxylysine. H220 is a substrate binding site. Residues H247 and H273 each contribute to the Ni(2+) site. H321 (proton donor) is an active-site residue. D361 lines the Ni(2+) pocket.

The protein belongs to the metallo-dependent hydrolases superfamily. Urease alpha subunit family. In terms of assembly, heterohexamer of 3 UreA (alpha) and 3 UreB (beta) subunits. Requires Ni cation as cofactor. Post-translationally, carboxylation allows a single lysine to coordinate two nickel ions.

It is found in the cytoplasm. The enzyme catalyses urea + 2 H2O + H(+) = hydrogencarbonate + 2 NH4(+). It functions in the pathway nitrogen metabolism; urea degradation; CO(2) and NH(3) from urea (urease route): step 1/1. In Campylobacter lari, this protein is Urease subunit beta.